The primary structure comprises 899 residues: MASNLLSRLLPSASDDLLEQEASNNQNRRTSSSTDERPDMDIDEENFGARFEAQDLNDLLAEASSSHMTTESRAASPEARRNAPPGINTAARAPAWRQPAPARAVPLDDDDDVPQSLLLEGGLDPPPNPHPRPDGLPPPVPGPSTRHTRAQWETTRQQQRLHGDDRGGAPVRDWGAIGRGGQFTADPKEKASWLWVNQTDLDTYMREVYEYYVGSGIYSMILRRTLSLLQSAFVVGFMTFLGWCIDYSKLSGSNKLSQVLVPKCTKEIHGFWIFALWVFTIYWLYSFYGLLTDIPRLRAMHDFYHYLLDVPDRDIQTIQWQQIVSRIMALRDLNLTTASNLSPETRKLLDSKSRQRLDAVDIASRLMRRDNYLIALFNKEILDVTVPIPFLGNRFIFSETTGWHVNLAVMEFVFSGPNGQFNQDFLKERNRRELVRRLRGRFFWTGIISIICAPFAVVFVLASYLFKYFTEYHKDPGQLSNRDFTTFAQWKFREFNELPHLFNRRRNMAYPYANLYLAQFPKDKTEQISSFVAFIAGAFASVLVAFTLLDSELFLTFEISPGKTAIFWIGVLTTIYRVARGSSPQEDQVTDPSYYLDHVIYHTRYKPDSWQDRLHTDEVRAEFAKLYQPKILIFAEEILSMVVTPFLLMFRLPQCSERIVDFFREFSIVVDGLGVTCSYSMFPFKKGTQNVNNAPANRSGAHKDDGDLREDYFMAKDNKMLASYYGFLDTYATTGKGNSARLPGRAGFHPPPQFPNAFGAMSQTAQPVDVGARGTSRGPAGRQPLQRRTPRSGPAGRDEPIASVLLDPHHQPSSASILRGSPRTGPSGRYRTPLQPVADTPGTRIEEESTIGDSWRTSRLAQDDDEEEEAPGANRGGVLQLLQQFSKAQAEGRGAGVGV.

Residues 1–173 form a disordered region; it reads MASNLLSRLL…DDRGGAPVRD (173 aa). The Cytoplasmic portion of the chain corresponds to 1-224; the sequence is MASNLLSRLL…SGIYSMILRR (224 aa). Residues 23-33 are compositionally biased toward low complexity; that stretch reads SNNQNRRTSSS. The span at 63–73 shows a compositional bias: polar residues; sequence ASSSHMTTESR. The segment covering 90-104 has biased composition (low complexity); the sequence is AARAPAWRQPAPARA. The segment covering 124 to 142 has biased composition (pro residues); it reads DPPPNPHPRPDGLPPPVPG. Positions 151–160 are enriched in polar residues; that stretch reads QWETTRQQQR. Residues 225 to 245 form a helical membrane-spanning segment; that stretch reads TLSLLQSAFVVGFMTFLGWCI. At 246-270 the chain is on the lumenal side; that stretch reads DYSKLSGSNKLSQVLVPKCTKEIHG. A helical membrane pass occupies residues 271-291; sequence FWIFALWVFTIYWLYSFYGLL. Residues 292 to 441 lie on the Cytoplasmic side of the membrane; it reads TDIPRLRAMH…RELVRRLRGR (150 aa). Residues 442–462 lie within the membrane without spanning it; that stretch reads FFWTGIISIICAPFAVVFVLA. The Cytoplasmic portion of the chain corresponds to 463 to 527; sequence SYLFKYFTEY…AQFPKDKTEQ (65 aa). Residues 528–548 form a helical membrane-spanning segment; that stretch reads ISSFVAFIAGAFASVLVAFTL. The Lumenal segment spans residues 549-552; the sequence is LDSE. Residues 553-573 traverse the membrane as a helical segment; it reads LFLTFEISPGKTAIFWIGVLT. At 574-629 the chain is on the cytoplasmic side; the sequence is TIYRVARGSSPQEDQVTDPSYYLDHVIYHTRYKPDSWQDRLHTDEVRAEFAKLYQP. The stretch at 630–650 is an intramembrane region; that stretch reads KILIFAEEILSMVVTPFLLMF. Residues 651–899 lie on the Cytoplasmic side of the membrane; the sequence is RLPQCSERIV…AEGRGAGVGV (249 aa). The tract at residues 769–876 is disordered; the sequence is DVGARGTSRG…EEEAPGANRG (108 aa). Positions 851 to 860 are enriched in polar residues; that stretch reads IGDSWRTSRL.

Belongs to the ATG9 family. As to quaternary structure, homotrimer; forms a homotrimer with a central pore that forms a path between the two membrane leaflets. In terms of processing, phosphorylated by ATG1. ATG1 phosphorylation is required for preautophagosome elongation.

The protein localises to the preautophagosomal structure membrane. It is found in the cytoplasmic vesicle membrane. Its subcellular location is the golgi apparatus membrane. It localises to the endoplasmic reticulum membrane. It catalyses the reaction a 1,2-diacyl-sn-glycero-3-phosphocholine(in) = a 1,2-diacyl-sn-glycero-3-phosphocholine(out). The catalysed reaction is a 1,2-diacyl-sn-glycero-3-phospho-L-serine(in) = a 1,2-diacyl-sn-glycero-3-phospho-L-serine(out). The enzyme catalyses a 1,2-diacyl-sn-glycero-3-phosphoethanolamine(in) = a 1,2-diacyl-sn-glycero-3-phosphoethanolamine(out). It carries out the reaction a 1,2-diacyl-sn-glycero-3-phospho-(1D-myo-inositol-3-phosphate)(in) = a 1,2-diacyl-sn-glycero-3-phospho-(1D-myo-inositol-3-phosphate)(out). Phospholipid scramblase involved in autophagy and cytoplasm to vacuole transport (Cvt) vesicle formation. Cycles between the preautophagosomal structure/phagophore assembly site (PAS) and the cytoplasmic vesicle pool and supplies membrane for the growing autophagosome. Lipid scramblase activity plays a key role in preautophagosomal structure/phagophore assembly by distributing the phospholipids that arrive through ATG2 from the cytoplasmic to the luminal leaflet of the bilayer, thereby driving autophagosomal membrane expansion. Required for mitophagy. Also involved in endoplasmic reticulum-specific autophagic process and is essential for the survival of cells subjected to severe ER stress. Different machineries are required for anterograde trafficking to the PAS during either the Cvt pathway or bulk autophagy and for retrograde trafficking. The polypeptide is Autophagy-related protein 9 (ATG9) (Phaeosphaeria nodorum (strain SN15 / ATCC MYA-4574 / FGSC 10173) (Glume blotch fungus)).